The chain runs to 311 residues: Methionyl-tRNA formyltransferase (311 aa).

110 to 113 serves as a coordination point for (6S)-5,6,7,8-tetrahydrofolate; that stretch reads SLLP.

Belongs to the Fmt family.

The catalysed reaction is L-methionyl-tRNA(fMet) + (6R)-10-formyltetrahydrofolate = N-formyl-L-methionyl-tRNA(fMet) + (6S)-5,6,7,8-tetrahydrofolate + H(+). In terms of biological role, attaches a formyl group to the free amino group of methionyl-tRNA(fMet). The formyl group appears to play a dual role in the initiator identity of N-formylmethionyl-tRNA by promoting its recognition by IF2 and preventing the misappropriation of this tRNA by the elongation apparatus. This Streptococcus pyogenes serotype M18 (strain MGAS8232) protein is Methionyl-tRNA formyltransferase.